The primary structure comprises 516 residues: MSMVQTVDNVALLPAYLAAGTAVLVLLADLLVARARVTISVAALGALATAAGAVLVGGGGERRTFCVGADCSYVFGGRAALVAVLVALLTLGVLGLSGPLLRAGATPVGEYCFLLAASMTGGVALGAAGDLITLIVALETLTLPLYVLVGLRRGSLASIEAAVTFFVVSVVATTLTLLGAALLYATTGALHLGRLGALFAERPELLDIPLTTVAVALVVVGLTVKVAAVPFHAWAPTTYDGAPLPVAAYLSTVSKLGGVVALLAVVQHALPAQITGLVLALLAVLTMTVGNLVALRQRRTVRLLAWSSVAQAGYILAPLGALALAAGRTGDARAAAYAAAVAYTVFFVVLELAAFAAVVALRPAGADGGTLDELRGAARRRPWAAVGLALALVGLAGLPPGLAGLFAKVTVVRSLLDGGAAGLALVVAVNAVLGLAYYLRVVAALWSTDRPAVIPTDPTAVPTDPAAAATGPAVGSIDPSVALVRAKPVAVVLAAATVVALVVGFAPQLVLDLAAR.

Transmembrane regions (helical) follow at residues 12-32 (LLPA…DLLV), 37-57 (VTIS…VLVG), 81-101 (LVAV…GPLL), 108-128 (VGEY…LGAA), 131-151 (LITL…LVGL), 163-183 (VTFF…AALL), 213-233 (VAVA…PFHA), 246-266 (VAAY…LAVV), 274-294 (ITGL…NLVA), 303-323 (LLAW…GALA), 341-361 (VAYT…VVAL), 386-406 (VGLA…AGLF), 419-439 (GAAG…AYYL), and 491-511 (VVLA…QLVL).

It belongs to the complex I subunit 2 family. NDH-1 is composed of 14 different subunits. Subunits NuoA, H, J, K, L, M, N constitute the membrane sector of the complex.

It localises to the cell membrane. The enzyme catalyses a quinone + NADH + 5 H(+)(in) = a quinol + NAD(+) + 4 H(+)(out). Its function is as follows. NDH-1 shuttles electrons from NADH, via FMN and iron-sulfur (Fe-S) centers, to quinones in the respiratory chain. The immediate electron acceptor for the enzyme in this species is believed to be a menaquinone. Couples the redox reaction to proton translocation (for every two electrons transferred, four hydrogen ions are translocated across the cytoplasmic membrane), and thus conserves the redox energy in a proton gradient. The chain is NADH-quinone oxidoreductase subunit N from Salinispora tropica (strain ATCC BAA-916 / DSM 44818 / JCM 13857 / NBRC 105044 / CNB-440).